Here is a 314-residue protein sequence, read N- to C-terminus: Protein REGULATOR OF FATTY ACID COMPOSITION 3, chloroplastic (314 aa).

The N-terminal 47 residues, 1-47 (MESLLHASSSLVSLRPRIDGRDSFINPSRVCLNPSLGRRGSKPLPLV), are a transit peptide targeting the chloroplast. Disordered regions lie at residues 49–73 (AAKK…ATGP) and 214–314 (AITE…NVGG). Residues 56 to 69 (KKDDNHNFSARPDE) show a composition bias toward basic and acidic residues. 2 stretches are compositionally biased toward acidic residues: residues 233–269 (EYYD…DDDG) and 277–294 (GDEE…EQEE). Residues 295-308 (GQDKSTNGRRETRR) are compositionally biased toward basic and acidic residues.

It belongs to the bacterial ribosomal protein bS6 family. Interacts with CFM3B/SPRT2 in plastids. Expressed ubiquitously in roots, leaves, stems, flower buds, flowers and siliques.

The protein resides in the plastid. It localises to the chloroplast. Its function is as follows. Prevents non-specific action of the splicing factor CFM3b during plastid rRNA biogenesis to improve the accuracy of plastid rRNA processing. Required for plastid functions such as photosynthesis, intracellular distribution, plastid rRNAs biosynthesis and plastid gene expression in roots. Involved in a sucrose-conditional process important for the organization of root lateral and apical meristems (e.g. establishment of RAM from pericycle and symplasmic connectivity), and subsequent primary and lateral roots development. Modulates C18 unsaturated fatty acid metabolism. The chain is Protein REGULATOR OF FATTY ACID COMPOSITION 3, chloroplastic from Arabidopsis thaliana (Mouse-ear cress).